A 273-amino-acid chain; its full sequence is MRRCIPHRCIGHGTVVSVRITVLGCSGSVVGPDSPASGYLLRAPHTPPLVIDFGGGVLGALQRHADPASVHVLLSHLHADHCLDLPGLFVWRRYHPSRPSGKALLYGPSDTWSRLGAASSPYGGEIDDCSDIFDVHHWADSEPVTLGALTIVPRLVAHPTESFGLRITDPSGASLAYSGDTGICDQLVELARGVDVFLCEASWTHSPKHPPDLHLSGTEAGMVAAQAGVRELLLTHIPPWTSREDVISEAKAEFDGPVHAVVCDETFEVRRAG.

It belongs to the AtsA family.

This is an uncharacterized protein from Mycobacterium tuberculosis (strain CDC 1551 / Oshkosh).